A 216-amino-acid chain; its full sequence is Flavin-dependent thymidylate synthase (216 aa).

Residues glycine 9 to tyrosine 206 enclose the ThyX domain. Residues serine 55, arginine 78–arginine 80, and glutamate 86 each bind FAD. DUMP-binding positions include glutamine 75–arginine 78, glutamate 86–arginine 90, and arginine 145. The ThyX motif motif lies at arginine 78–serine 88. FAD-binding positions include asparagine 161–arginine 163 and asparagine 167. Residue arginine 172 coordinates dUMP. Arginine 172 (involved in ionization of N3 of dUMP, leading to its activation) is an active-site residue.

The protein belongs to the thymidylate synthase ThyX family. Homotetramer. The cofactor is FAD.

It carries out the reaction dUMP + (6R)-5,10-methylene-5,6,7,8-tetrahydrofolate + NADPH + H(+) = dTMP + (6S)-5,6,7,8-tetrahydrofolate + NADP(+). The protein operates within pyrimidine metabolism; dTTP biosynthesis. Its function is as follows. Catalyzes the reductive methylation of 2'-deoxyuridine-5'-monophosphate (dUMP) to 2'-deoxythymidine-5'-monophosphate (dTMP) while utilizing 5,10-methylenetetrahydrofolate (mTHF) as the methyl donor, and NADPH and FADH(2) as the reductant. The polypeptide is Flavin-dependent thymidylate synthase (Thermotoga neapolitana (strain ATCC 49049 / DSM 4359 / NBRC 107923 / NS-E)).